We begin with the raw amino-acid sequence, 509 residues long: Probable DNA ligase (509 aa).

Position 218 (Asp-218) interacts with ATP. Lys-220 serves as the catalytic N6-AMP-lysine intermediate. Residues Arg-225, Arg-240, Glu-269, Phe-302, Arg-374, and Lys-380 each contribute to the ATP site.

Belongs to the ATP-dependent DNA ligase family. It depends on Mg(2+) as a cofactor.

It catalyses the reaction ATP + (deoxyribonucleotide)n-3'-hydroxyl + 5'-phospho-(deoxyribonucleotide)m = (deoxyribonucleotide)n+m + AMP + diphosphate.. In terms of biological role, DNA ligase that seals nicks in double-stranded DNA during DNA replication, DNA recombination and DNA repair. The sequence is that of Probable DNA ligase from Nocardioides sp. (strain ATCC BAA-499 / JS614).